The chain runs to 462 residues: 2-amino-5-chloromuconic acid deaminase (462 aa).

Residues lysine 79 and serine 156 each act as charge relay system in the active site. Serine 180 (acyl-ester intermediate) is an active-site residue.

This sequence belongs to the amidase family.

The catalysed reaction is (2Z,4E)-2-aminomuconate + H2O = (3E)-2-oxohex-3-enedioate + NH4(+). Its pathway is xenobiotic degradation; nitrobenzene degradation. The protein operates within xenobiotic degradation; 4-chloronitrobenzene degradation. Involved in the biodegradation of nitroaromatic and chlorinated nitroaromatic compounds. Catalyzes the conversion of 2-amino-5-chloromuconic acid into 2-hydroxy-5-chloromuconic acid and ammonia. Also able to catalyze the transformation of 2-aminomuconic acid into 2-hydroxymuconic acid. The sequence is that of 2-amino-5-chloromuconic acid deaminase from Comamonas testosteroni (Pseudomonas testosteroni).